A 788-amino-acid chain; its full sequence is Ribonucleoside-diphosphate reductase large subunit (788 aa).

The ATP-cone domain occupies 7–98 (TYVVKRDGRK…VSNLHKKTNK (92 aa)). ATP is bound by residues 11 to 12 (KR), 17 to 23 (EDVHFDK), Thr-59, and Asp-63. Residues Ser-208 and Ser-223 each contribute to the GDP site. A disulfide bridge links Cys-224 with Cys-450. Residues 232 to 234 (DSI), Lys-249, Arg-262, and 269 to 270 (AG) each bind dTTP. Position 433 (Asn-433) interacts with GDP. The Proton acceptor role is filled by Asn-433. Residue Cys-435 is the Cysteine radical intermediate of the active site. Residues Glu-437 and 610–613 (TAST) contribute to the GDP site. Glu-437 serves as the catalytic Proton acceptor.

The protein belongs to the ribonucleoside diphosphate reductase large chain family. Heterodimer of a large and a small subunit.

It carries out the reaction a 2'-deoxyribonucleoside 5'-diphosphate + [thioredoxin]-disulfide + H2O = a ribonucleoside 5'-diphosphate + [thioredoxin]-dithiol. Under complex allosteric control mediated by deoxynucleoside triphosphates and ATP binding to separate specificity and activation sites on the large subunit. The type of nucleotide bound at the specificity site determines substrate preference. It seems probable that ATP makes the enzyme reduce CDP and UDP, dGTP favors ADP reduction and dTTP favors GDP reduction. Stimulated by ATP and inhibited by dATP binding to the activity site. Its function is as follows. Provides the precursors necessary for DNA synthesis. Catalyzes the biosynthesis of deoxyribonucleotides from the corresponding ribonucleotides. In Caenorhabditis elegans, this protein is Ribonucleoside-diphosphate reductase large subunit (rnr-1).